Reading from the N-terminus, the 272-residue chain is 2-dehydro-3-deoxyphosphooctonate aldolase (272 aa).

This sequence belongs to the KdsA family.

The protein resides in the cytoplasm. It catalyses the reaction D-arabinose 5-phosphate + phosphoenolpyruvate + H2O = 3-deoxy-alpha-D-manno-2-octulosonate-8-phosphate + phosphate. The protein operates within carbohydrate biosynthesis; 3-deoxy-D-manno-octulosonate biosynthesis; 3-deoxy-D-manno-octulosonate from D-ribulose 5-phosphate: step 2/3. Its pathway is bacterial outer membrane biogenesis; lipopolysaccharide biosynthesis. The polypeptide is 2-dehydro-3-deoxyphosphooctonate aldolase (Geobacter metallireducens (strain ATCC 53774 / DSM 7210 / GS-15)).